Here is a 108-residue protein sequence, read N- to C-terminus: UPF0145 protein sll118 (108 aa).

This sequence belongs to the UPF0145 family.

The protein is UPF0145 protein sll118 of Synechocystis sp. (strain ATCC 27184 / PCC 6803 / Kazusa).